The chain runs to 27 residues: rRNA/tRNA 2'-O-methyltransferase fibrillarin (27 aa).

Residues 1–12 are compositionally biased toward gly residues; that stretch reads XFEGRGGFGGRG. A disordered region spans residues 1 to 27; sequence XFEGRGGFGGRGGGDRGGRGXGGFGGG. Asymmetric dimethylarginine occurs at positions 5, 11, 16, and 19.

The protein belongs to the methyltransferase superfamily. Fibrillarin family. In terms of assembly, component of box C/D small nucleolar ribonucleoprotein (snoRNP) particles. It is associated with the U3, U8 and U13 small nuclear RNAs.

Its subcellular location is the nucleus. It is found in the nucleolus. The enzyme catalyses L-glutaminyl-[histone H2A] + S-adenosyl-L-methionine = N(5)-methyl-L-glutaminyl-[histone H2A] + S-adenosyl-L-homocysteine + H(+). In terms of biological role, S-adenosyl-L-methionine-dependent methyltransferase that has the ability to methylate both RNAs and proteins. Involved in pre-rRNA processing. Utilizes the methyl donor S-adenosyl-L-methionine to catalyze the site-specific 2'-hydroxyl methylation of ribose moieties in pre-ribosomal RNA. Site specificity is provided by a guide RNA that base pairs with the substrate. Methylation occurs at a characteristic distance from the sequence involved in base pairing with the guide RNA. Also acts as a protein methyltransferase by mediating methylation of 'Gln-105' of histone H2A (H2AQ105me), a modification that impairs binding of the FACT complex and is specifically present at 35S ribosomal DNA locus. This is rRNA/tRNA 2'-O-methyltransferase fibrillarin from Physarum polycephalum (Slime mold).